The sequence spans 1683 residues: E3 ubiquitin-protein ligase SHPRH (1683 aa).

Residues 1–43 (MSSRRKRAPPVRVDEEKRQQLHWNMHEDRRNEPIIISDDDEQP) form a disordered region. The segment covering 12–32 (RVDEEKRQQLHWNMHEDRRNE) has biased composition (basic and acidic residues). S266 carries the post-translational modification Phosphoserine. The Helicase ATP-binding; first part domain maps to 307 to 389 (YQREAVNWML…TVEVLALILT (83 aa)). 373–380 (DEMGLGKT) serves as a coordination point for ATP. The 75-residue stretch at 438 to 512 (QCPPTRVMIL…GFSGTFTLGK (75 aa)) folds into the H15 domain. Residues 525 to 607 (KQAVGSPRKI…QGHCPATSDS (83 aa)) form a disordered region. The segment covering 534–547 (IQKETRKSGNKDTD) has biased composition (basic and acidic residues). Basic residues predominate over residues 568-588 (KSRRNRSKLRKKLVPSTKKGK). A Phosphoserine modification is found at S635. The PHD-type zinc finger occupies 658 to 709 (RFECICGELDQIDRKPRVQCLKCHLWQHAKCVNYDEKNLKIKPFYCPHCLVA). Positions 710–868 (MEPVSTRATL…FGLVVFLGIE (159 aa)) constitute a Helicase ATP-binding; second part domain. The DEAQ box motif lies at 819-822 (DEAQ). The RING-type zinc finger occupies 1432–1479 (CPICARQLGKQWAVLTCGHCFCNECISIIIEQYSVGSHRSSIKCAICR). The Helicase C-terminal domain maps to 1514–1672 (AVVRTLMKIQ…ASVLTVADLA (159 aa)).

This sequence belongs to the SNF2/RAD54 helicase family. In terms of assembly, homodimer. Interacts with HLTF, PCNA, UBE2N and RAD18. As to expression, broadly expressed.

It catalyses the reaction S-ubiquitinyl-[E2 ubiquitin-conjugating enzyme]-L-cysteine + [acceptor protein]-L-lysine = [E2 ubiquitin-conjugating enzyme]-L-cysteine + N(6)-ubiquitinyl-[acceptor protein]-L-lysine.. It functions in the pathway protein modification; protein ubiquitination. Functionally, E3 ubiquitin-protein ligase involved in DNA repair. Upon genotoxic stress, accepts ubiquitin from the UBE2N-UBE2V2 E2 complex and transfers it to 'Lys-164' of PCNA which had been monoubiquitinated by UBE2A/B-RAD18, promoting the formation of non-canonical poly-ubiquitin chains linked through 'Lys-63'. The chain is E3 ubiquitin-protein ligase SHPRH (SHPRH) from Homo sapiens (Human).